Consider the following 127-residue polypeptide: S-adenosylmethionine decarboxylase proenzyme 2 (127 aa).

Catalysis depends on Ser-63, which acts as the Schiff-base intermediate with substrate; via pyruvic acid. At Ser-63 the chain carries Pyruvic acid (Ser); by autocatalysis. The active-site Proton acceptor; for processing activity is the His-68. The active-site Proton donor; for catalytic activity is the Cys-83.

The protein belongs to the prokaryotic AdoMetDC family. Type 1 subfamily. Heterotetramer of two alpha and two beta chains arranged as a dimer of alpha/beta heterodimers. Requires pyruvate as cofactor. In terms of processing, is synthesized initially as an inactive proenzyme. Formation of the active enzyme involves a self-maturation process in which the active site pyruvoyl group is generated from an internal serine residue via an autocatalytic post-translational modification. Two non-identical subunits are generated from the proenzyme in this reaction, and the pyruvate is formed at the N-terminus of the alpha chain, which is derived from the carboxyl end of the proenzyme. The post-translation cleavage follows an unusual pathway, termed non-hydrolytic serinolysis, in which the side chain hydroxyl group of the serine supplies its oxygen atom to form the C-terminus of the beta chain, while the remainder of the serine residue undergoes an oxidative deamination to produce ammonia and the pyruvoyl group blocking the N-terminus of the alpha chain.

It carries out the reaction S-adenosyl-L-methionine + H(+) = S-adenosyl 3-(methylsulfanyl)propylamine + CO2. The protein operates within amine and polyamine biosynthesis; S-adenosylmethioninamine biosynthesis; S-adenosylmethioninamine from S-adenosyl-L-methionine: step 1/1. Functionally, catalyzes the decarboxylation of S-adenosylmethionine to S-adenosylmethioninamine (dcAdoMet), the propylamine donor required for the synthesis of the polyamines spermine and spermidine from the diamine putrescine. This chain is S-adenosylmethionine decarboxylase proenzyme 2, found in Halalkalibacterium halodurans (strain ATCC BAA-125 / DSM 18197 / FERM 7344 / JCM 9153 / C-125) (Bacillus halodurans).